Reading from the N-terminus, the 500-residue chain is Glycerol-3-phosphate acyltransferase 7 (500 aa).

2 helical membrane passes run 38-58 (GLIR…LDVL) and 235-255 (ALII…RIFV). Positions 298-303 (HRTLMD) match the HXXXXD motif motif.

The protein belongs to the GPAT/DAPAT family. As to expression, weakly or not expressed in roots, leaves, seedlings, developing siliques and flower buds.

It localises to the membrane. The enzyme catalyses sn-glycerol 3-phosphate + an acyl-CoA = a 1-acyl-sn-glycero-3-phosphate + CoA. It functions in the pathway phospholipid metabolism; CDP-diacylglycerol biosynthesis; CDP-diacylglycerol from sn-glycerol 3-phosphate: step 1/3. Functionally, esterifies acyl-group from acyl-ACP to the sn-1 position of glycerol-3-phosphate, an essential step in glycerolipid biosynthesis. This chain is Glycerol-3-phosphate acyltransferase 7 (GPAT7), found in Arabidopsis thaliana (Mouse-ear cress).